The sequence spans 397 residues: Guanine nucleotide-binding protein G(s) subunit alpha (397 aa).

Residues 1-23 (MGCLGNSKTEDQRNEEKAQREAN) form a disordered region. Residue G2 is the site of N-palmitoyl glycine attachment. C3 carries S-palmitoyl cysteine lipidation. The segment covering 8-23 (KTEDQRNEEKAQREAN) has biased composition (basic and acidic residues). The G-alpha domain occupies 39-397 (ATHRLLLLGA…RMHLRQYELL (359 aa)). The interval 42-55 (RLLLLGAGESGKST) is G1 motif. GTP is bound by residues 47–55 (GAGESGKST), 182–189 (LLRCRVLT), 208–212 (DVGGQ), 277–280 (NKQD), and A369. 2 residues coordinate Mg(2+): S54 and T189. Positions 181–189 (DLLRCRVLT) are G2 motif. The G3 motif stretch occupies residues 204–213 (FHMFDVGGQR). A G4 motif region spans residues 273 to 280 (ILFLNKQD). The tract at residues 367-372 (TCAVDT) is G5 motif.

Belongs to the G-alpha family. G(s) subfamily. In terms of assembly, heterotrimeric G proteins are composed of 3 units; alpha, beta and gamma. The alpha chain contains the guanine nucleotide binding site. Interacts with CRY1; the interaction may block GPCR-mediated regulation of cAMP concentrations. Interacts with ADCY6 and stimulates its adenylyl cyclase activity. Interacts with ADCY2 and ADCY5. Stimulates the ADCY5 adenylyl cyclase activity. Interaction with SASH1.

It is found in the cell membrane. Its function is as follows. Guanine nucleotide-binding proteins (G proteins) function as transducers in numerous signaling pathways controlled by G protein-coupled receptors (GPCRs). Signaling involves the activation of adenylyl cyclases, resulting in increased levels of the signaling molecule cAMP. GNAS functions downstream of several GPCRs, including beta-adrenergic receptors. Stimulates the Ras signaling pathway via RAPGEF2. This chain is Guanine nucleotide-binding protein G(s) subunit alpha (GNAS), found in Sus scrofa (Pig).